A 584-amino-acid polypeptide reads, in one-letter code: uncharacterized protein (584 aa).

The span at 353 to 375 shows a compositional bias: polar residues; sequence NSEGQTNAETSLNGKGTVGNQWA. Disordered regions lie at residues 353–379, 400–426, and 463–565; these read NSEGQTNAETSLNGKGTVGNQWASPPE, LESKFNGTGGGQTDSEKEQIMESVSSH, and SVDS…CNSG. The segment covering 502–511 has biased composition (polar residues); it reads KANSPASSRL. The span at 516-535 shows a compositional bias: basic and acidic residues; it reads DSSHLSKHVNFDKNPDHSEA.

This is an uncharacterized protein from Mus musculus (Mouse).